The primary structure comprises 206 residues: Ras-related protein Rab7 (206 aa).

GTP-binding positions include 15–22, 63–67, and 125–128; these read GDSGVGKT, DTAGQ, and NKID. Residues Cys204 and Cys206 are each lipidated (S-geranylgeranyl cysteine). Residue Cys206 is modified to Cysteine methyl ester.

This sequence belongs to the small GTPase superfamily. Rab family.

It localises to the cell membrane. Functionally, protein transport. Probably involved in vesicular traffic. The chain is Ras-related protein Rab7 from Pisum sativum (Garden pea).